Here is a 50-residue protein sequence, read N- to C-terminus: Photosystem II reaction center protein M (50 aa).

Residues 7–27 (GFVASLLFVGIPTIFLIGLFI) traverse the membrane as a helical segment.

The protein belongs to the PsbM family. PSII is composed of 1 copy each of membrane proteins PsbA, PsbB, PsbC, PsbD, PsbE, PsbF, PsbH, PsbI, PsbJ, PsbK, PsbL, PsbM, PsbT, PsbX, PsbY, Psb30/Ycf12, peripheral proteins PsbO, CyanoQ (PsbQ), PsbU, PsbV and a large number of cofactors. It forms dimeric complexes.

Its subcellular location is the cellular thylakoid membrane. One of the components of the core complex of photosystem II (PSII). PSII is a light-driven water:plastoquinone oxidoreductase that uses light energy to abstract electrons from H(2)O, generating O(2) and a proton gradient subsequently used for ATP formation. It consists of a core antenna complex that captures photons, and an electron transfer chain that converts photonic excitation into a charge separation. This subunit is found at the monomer-monomer interface. The chain is Photosystem II reaction center protein M from Prochlorococcus marinus subsp. pastoris (strain CCMP1986 / NIES-2087 / MED4).